The following is a 333-amino-acid chain: MIYAAFRSIGAYIPPKIMSNADFEKIIDTSDEWITKRTGIKERRIANEGEASSDLGARAGELAIERAAISKEEIDLVICATVTPDFLCMPSTACLIAAKLGLSNVMAFDVSAACTGFVYALNVAKAFIESGMKKNVLIVGAEKYSAILDYTDRTTCFLFGDGAGAAIISATNDKSESIIDINCSSDGNYEDLIKTPGGGSKNPCSQEVLENKMACIKMKGNETFKLAVKTLTSDVKTMLEKHNLTNEDINHFIPHQANYRIIKAVGEALDLSDEKTVVTVDKYGNTSAASIPMAMNYAFEQGKIKAGDTILFDAFGGGLTWGSALFKFAPIKR.

Active-site residues include Cys114 and His255. The segment at 256 to 260 (QANYR) is ACP-binding. Asn285 is an active-site residue.

The protein belongs to the thiolase-like superfamily. FabH family. Homodimer.

It localises to the cytoplasm. The catalysed reaction is malonyl-[ACP] + acetyl-CoA + H(+) = 3-oxobutanoyl-[ACP] + CO2 + CoA. It functions in the pathway lipid metabolism; fatty acid biosynthesis. Catalyzes the condensation reaction of fatty acid synthesis by the addition to an acyl acceptor of two carbons from malonyl-ACP. Catalyzes the first condensation reaction which initiates fatty acid synthesis and may therefore play a role in governing the total rate of fatty acid production. Possesses both acetoacetyl-ACP synthase and acetyl transacylase activities. Its substrate specificity determines the biosynthesis of branched-chain and/or straight-chain of fatty acids. This is Beta-ketoacyl-[acyl-carrier-protein] synthase III from Aliarcobacter butzleri (strain RM4018) (Arcobacter butzleri).